The chain runs to 38 residues: Large ribosomal subunit protein bL36B (38 aa).

Belongs to the bacterial ribosomal protein bL36 family.

The sequence is that of Large ribosomal subunit protein bL36B from Prochlorococcus marinus (strain MIT 9515).